The following is a 285-amino-acid chain: Acetyl-coenzyme A carboxylase carboxyl transferase subunit beta (285 aa).

The CoA carboxyltransferase N-terminal domain occupies 29–285; the sequence is IMTKCPKCKK…ILKIHQEVTK (257 aa). Zn(2+)-binding residues include cysteine 33, cysteine 36, cysteine 52, and cysteine 55. A C4-type zinc finger spans residues 33–55; that stretch reads CPKCKKIMYTKELAENLNVCFNC.

This sequence belongs to the AccD/PCCB family. As to quaternary structure, acetyl-CoA carboxylase is a heterohexamer composed of biotin carboxyl carrier protein (AccB), biotin carboxylase (AccC) and two subunits each of ACCase subunit alpha (AccA) and ACCase subunit beta (AccD). It depends on Zn(2+) as a cofactor.

It localises to the cytoplasm. The catalysed reaction is N(6)-carboxybiotinyl-L-lysyl-[protein] + acetyl-CoA = N(6)-biotinyl-L-lysyl-[protein] + malonyl-CoA. It participates in lipid metabolism; malonyl-CoA biosynthesis; malonyl-CoA from acetyl-CoA: step 1/1. Component of the acetyl coenzyme A carboxylase (ACC) complex. Biotin carboxylase (BC) catalyzes the carboxylation of biotin on its carrier protein (BCCP) and then the CO(2) group is transferred by the transcarboxylase to acetyl-CoA to form malonyl-CoA. The chain is Acetyl-coenzyme A carboxylase carboxyl transferase subunit beta from Staphylococcus aureus (strain Newman).